Reading from the N-terminus, the 125-residue chain is Fluoride-specific ion channel FluC (125 aa).

A run of 4 helical transmembrane segments spans residues 1 to 21 (MFAT…ARYG), 34 to 54 (FPWA…FLFF), 72 to 92 (TGGL…LVLF), and 101 to 121 (LLYM…GAWI). Na(+)-binding residues include Gly-76 and Thr-79.

It belongs to the fluoride channel Fluc/FEX (TC 1.A.43) family.

The protein localises to the cell inner membrane. It catalyses the reaction fluoride(in) = fluoride(out). Na(+) is not transported, but it plays an essential structural role and its presence is essential for fluoride channel function. Its function is as follows. Fluoride-specific ion channel. Important for reducing fluoride concentration in the cell, thus reducing its toxicity. The polypeptide is Fluoride-specific ion channel FluC (Acidithiobacillus ferrooxidans (strain ATCC 23270 / DSM 14882 / CIP 104768 / NCIMB 8455) (Ferrobacillus ferrooxidans (strain ATCC 23270))).